The following is a 368-amino-acid chain: MAPCTLLLLLAAALAPTQTRAGPHSLRYFVTAVSRPGLGEPRFIAVGYVDDTQFVRFDSDADNPRFEPRAPWMEQEGPEYWEEQTQRAKSDEQWFRVSLRTAQRYYNQSKGGSHTFQRMFGCDVGSDWRLLRGYQQFAYDGRDYIALNEDLKTWTAADTAALITRRKWEQAGDAEYYRAYLEGECVEWLRRYLELGNETLLRTDSPKAHVTYHPRSQVDVTLRCWALGFYPADITLTWQLNGEDLTQDMELVETRPAGDGTFQKWAAVVVPLGKEQNYTCHVHHKGLPEPLTLRWKLPPSTVSNTVIIAVLVVLGAAIVTGAVVAFVMKMRRNTGGKGVNYALAPGSQTSDLSLPDGKVMVHDPHSLA.

Residues 1–21 (MAPCTLLLLLAAALAPTQTRA) form the signal peptide. An alpha-1 region spans residues 22–111 (GPHSLRYFVT…AQRYYNQSKG (90 aa)). Residues 22-305 (GPHSLRYFVT…KLPPSTVSNT (284 aa)) lie on the Extracellular side of the membrane. N-linked (GlcNAc...) asparagine glycosylation is present at N107. The interval 112–203 (GSHTFQRMFG…ELGNETLLRT (92 aa)) is alpha-2. C122 and C185 form a disulfide bridge. N-linked (GlcNAc...) asparagine glycans are attached at residues N197 and N277. Positions 204–295 (DSPKAHVTYH…GLPEPLTLRW (92 aa)) are alpha-3. One can recognise an Ig-like C1-type domain in the interval 206–294 (PKAHVTYHPR…KGLPEPLTLR (89 aa)). A disulfide bridge connects residues C224 and C280. Residues 296-305 (KLPPSTVSNT) are connecting peptide. A helical membrane pass occupies residues 306-328 (VIIAVLVVLGAAIVTGAVVAFVM). Residues 329-368 (KMRRNTGGKGVNYALAPGSQTSDLSLPDGKVMVHDPHSLA) lie on the Cytoplasmic side of the membrane. S350 and S353 each carry phosphoserine.

The protein belongs to the MHC class I family. Heterodimer of an alpha chain and a beta chain (beta-2-microglobulin).

It localises to the membrane. Functionally, involved in the presentation of foreign antigens to the immune system. In Mus musculus (Mouse), this protein is H-2 class I histocompatibility antigen, K-D alpha chain (H2-K1).